Consider the following 188-residue polypeptide: Elongation factor P (188 aa).

This sequence belongs to the elongation factor P family.

The protein resides in the cytoplasm. It functions in the pathway protein biosynthesis; polypeptide chain elongation. Involved in peptide bond synthesis. Stimulates efficient translation and peptide-bond synthesis on native or reconstituted 70S ribosomes in vitro. Probably functions indirectly by altering the affinity of the ribosome for aminoacyl-tRNA, thus increasing their reactivity as acceptors for peptidyl transferase. The polypeptide is Elongation factor P (Cellvibrio japonicus (strain Ueda107) (Pseudomonas fluorescens subsp. cellulosa)).